Reading from the N-terminus, the 469-residue chain is 3-isopropylmalate dehydratase large subunit (469 aa).

Cys-347, Cys-410, and Cys-413 together coordinate [4Fe-4S] cluster.

The protein belongs to the aconitase/IPM isomerase family. LeuC type 1 subfamily. In terms of assembly, heterodimer of LeuC and LeuD. [4Fe-4S] cluster serves as cofactor.

It carries out the reaction (2R,3S)-3-isopropylmalate = (2S)-2-isopropylmalate. It participates in amino-acid biosynthesis; L-leucine biosynthesis; L-leucine from 3-methyl-2-oxobutanoate: step 2/4. Catalyzes the isomerization between 2-isopropylmalate and 3-isopropylmalate, via the formation of 2-isopropylmaleate. The protein is 3-isopropylmalate dehydratase large subunit of Burkholderia orbicola (strain MC0-3).